The sequence spans 291 residues: Bifunctional protein FolD (291 aa).

NADP(+) contacts are provided by residues 166-168 (GAG), isoleucine 191, and isoleucine 232.

Belongs to the tetrahydrofolate dehydrogenase/cyclohydrolase family. Homodimer.

It carries out the reaction (6R)-5,10-methylene-5,6,7,8-tetrahydrofolate + NADP(+) = (6R)-5,10-methenyltetrahydrofolate + NADPH. The catalysed reaction is (6R)-5,10-methenyltetrahydrofolate + H2O = (6R)-10-formyltetrahydrofolate + H(+). It participates in one-carbon metabolism; tetrahydrofolate interconversion. Catalyzes the oxidation of 5,10-methylenetetrahydrofolate to 5,10-methenyltetrahydrofolate and then the hydrolysis of 5,10-methenyltetrahydrofolate to 10-formyltetrahydrofolate. The sequence is that of Bifunctional protein FolD from Aquifex aeolicus (strain VF5).